A 324-amino-acid polypeptide reads, in one-letter code: Phospho-N-acetylmuramoyl-pentapeptide-transferase (324 aa).

9 helical membrane-spanning segments follow: residues 5 to 25 (VILF…PIFI), 51 to 71 (TPTM…IVMI), 77 to 97 (ISPE…LGFL), 117 to 137 (LIGQ…YQFA), 147 to 167 (VSFD…VGGS), 176 to 196 (LDGL…ILAW), 203 to 223 (VAIF…FNAH), 227 to 248 (VFMG…AILT), and 302 to 322 (VVVT…YIEV).

It belongs to the glycosyltransferase 4 family. MraY subfamily. Mg(2+) is required as a cofactor.

The protein localises to the cell membrane. It carries out the reaction UDP-N-acetyl-alpha-D-muramoyl-L-alanyl-gamma-D-glutamyl-meso-2,6-diaminopimeloyl-D-alanyl-D-alanine + di-trans,octa-cis-undecaprenyl phosphate = di-trans,octa-cis-undecaprenyl diphospho-N-acetyl-alpha-D-muramoyl-L-alanyl-D-glutamyl-meso-2,6-diaminopimeloyl-D-alanyl-D-alanine + UMP. The protein operates within cell wall biogenesis; peptidoglycan biosynthesis. In terms of biological role, catalyzes the initial step of the lipid cycle reactions in the biosynthesis of the cell wall peptidoglycan: transfers peptidoglycan precursor phospho-MurNAc-pentapeptide from UDP-MurNAc-pentapeptide onto the lipid carrier undecaprenyl phosphate, yielding undecaprenyl-pyrophosphoryl-MurNAc-pentapeptide, known as lipid I. The polypeptide is Phospho-N-acetylmuramoyl-pentapeptide-transferase (Bacillus pumilus (strain SAFR-032)).